The following is a 362-amino-acid chain: Large ribosomal subunit protein uL4A (362 aa).

Ser-2 carries the N-acetylserine modification. An Omega-N-methylarginine modification is found at Arg-95. The interval 277–362 (PSHIISTSDV…AVFTETLKHD (86 aa)) is C-terminal-extended nuclear localization signal.

The protein belongs to the universal ribosomal protein uL4 family. As to quaternary structure, component of the large ribosomal subunit (LSU). Mature yeast ribosomes consist of a small (40S) and a large (60S) subunit. The 40S small subunit contains 1 molecule of ribosomal RNA (18S rRNA) and 33 different proteins (encoded by 57 genes). The large 60S subunit contains 3 rRNA molecules (25S, 5.8S and 5S rRNA) and 46 different proteins (encoded by 81 genes). uL4 is associated with the polypeptide exit tunnel. uL4 interacts with its chaperone ACL4 and the nuclear import receptor KAP104. N-terminally acetylated by acetyltransferase NatA.

It localises to the cytoplasm. The protein resides in the nucleus. Component of the ribosome, a large ribonucleoprotein complex responsible for the synthesis of proteins in the cell. The small ribosomal subunit (SSU) binds messenger RNAs (mRNAs) and translates the encoded message by selecting cognate aminoacyl-transfer RNA (tRNA) molecules. The large subunit (LSU) contains the ribosomal catalytic site termed the peptidyl transferase center (PTC), which catalyzes the formation of peptide bonds, thereby polymerizing the amino acids delivered by tRNAs into a polypeptide chain. The nascent polypeptides leave the ribosome through a tunnel in the LSU and interact with protein factors that function in enzymatic processing, targeting, and the membrane insertion of nascent chains at the exit of the ribosomal tunnel. uL4 participates in the regulation of the accumulation of its own mRNA. The polypeptide is Large ribosomal subunit protein uL4A (Saccharomyces cerevisiae (strain ATCC 204508 / S288c) (Baker's yeast)).